Consider the following 219-residue polypeptide: Thiamine-phosphate synthase (219 aa).

4-amino-2-methyl-5-(diphosphooxymethyl)pyrimidine is bound by residues 44–48 (QFREK) and Asn79. Mg(2+)-binding residues include Asp80 and Asp99. Residue Ser117 participates in 4-amino-2-methyl-5-(diphosphooxymethyl)pyrimidine binding. 2-[(2R,5Z)-2-carboxy-4-methylthiazol-5(2H)-ylidene]ethyl phosphate is bound at residue 143–145 (TST). Lys146 is a 4-amino-2-methyl-5-(diphosphooxymethyl)pyrimidine binding site. 2-[(2R,5Z)-2-carboxy-4-methylthiazol-5(2H)-ylidene]ethyl phosphate is bound by residues Gly175 and 195-196 (IS).

Belongs to the thiamine-phosphate synthase family. The cofactor is Mg(2+).

It catalyses the reaction 2-[(2R,5Z)-2-carboxy-4-methylthiazol-5(2H)-ylidene]ethyl phosphate + 4-amino-2-methyl-5-(diphosphooxymethyl)pyrimidine + 2 H(+) = thiamine phosphate + CO2 + diphosphate. The enzyme catalyses 2-(2-carboxy-4-methylthiazol-5-yl)ethyl phosphate + 4-amino-2-methyl-5-(diphosphooxymethyl)pyrimidine + 2 H(+) = thiamine phosphate + CO2 + diphosphate. It carries out the reaction 4-methyl-5-(2-phosphooxyethyl)-thiazole + 4-amino-2-methyl-5-(diphosphooxymethyl)pyrimidine + H(+) = thiamine phosphate + diphosphate. The protein operates within cofactor biosynthesis; thiamine diphosphate biosynthesis; thiamine phosphate from 4-amino-2-methyl-5-diphosphomethylpyrimidine and 4-methyl-5-(2-phosphoethyl)-thiazole: step 1/1. Its function is as follows. Condenses 4-methyl-5-(beta-hydroxyethyl)thiazole monophosphate (THZ-P) and 2-methyl-4-amino-5-hydroxymethyl pyrimidine pyrophosphate (HMP-PP) to form thiamine monophosphate (TMP). The protein is Thiamine-phosphate synthase of Bacillus cereus (strain 03BB102).